The sequence spans 483 residues: MVTQTNPVPVTYPTDAYIPTYLPDDKVSNLADLKKLIEMDSRLDLYLTRRRLDTSINLPTNTKTKDHPPNKEMLRIYVYNTTESSPRSDSGTPADSGKTTWTLRIEGKLLHESANGKHPFSEFLEGVAVDFKRLKPLGMGKKRKRDSSLSLPLNLQQPEYNDQDSTMGDNDNGEDEDSAEAESREEIVDALEWNYDENNVVEFDGIDIKRQGKDNLRCSITIQLRGVDGGKVQYSPNLATLIGMQTGSVNDAVYSIYKYILINNLFVTEQTEAQDGSNDAEDSSNENNNKNGAGDDDGVEGSTPKDKPELGEVKLDSLLQKVLDTNAAHLPLMNVVQTVNKLVSPLPPIILDYTIDLSKDTTYGATTLDVDVSHILHQPQPQPNLQKEEETDAEDTAKLREITKLALQLNSSAQKYQFFHELSLHPRETLTHYLWSSKQNELVLQGDQYFNEDAARTSDIYSNNNNDRSLMGNISLLYSQGRL.

Disordered stretches follow at residues 142–183 and 273–309; these read KRKR…EAES and AQDGSNDAEDSSNENNNKNGAGDDDGVEGSTPKDKPE. Over residues 148–158 the composition is skewed to low complexity; the sequence is SLSLPLNLQQP. Acidic residues predominate over residues 171–180; the sequence is DNGEDEDSAE.

It to yeast SNF12. As to quaternary structure, interacts directly with RSC8. Component of the two forms of the RSC complex composed of at least either RSC1 or RSC2, and ARP7, ARP9, LDB7, NPL6, RSC3, RSC30, RSC4, RSC58, RSC6, RSC8, RSC9, SFH1, STH1, HTL1 and probably RTT102. The complexes interact with histone and histone variant components of centromeric chromatin.

It is found in the nucleus. Functionally, component of the chromatin structure-remodeling complex (RSC), which is involved in transcription regulation and nucleosome positioning. RSC is responsible for the transfer of a histone octamer from a nucleosome core particle to naked DNA. The reaction requires ATP and involves an activated RSC-nucleosome intermediate. Remodeling reaction also involves DNA translocation, DNA twist and conformational change. As a reconfigurer of centromeric and flanking nucleosomes, RSC complex is required both for proper kinetochore function in chromosome segregation and, via a PKC1-dependent signaling pathway, for organization of the cellular cytoskeleton. This subunit is essential for mitotic growth and suppresses formamide sensitivity of the RSC8 mutants. This is Chromatin structure-remodeling complex protein RSC6 (RSC6) from Saccharomyces cerevisiae (strain ATCC 204508 / S288c) (Baker's yeast).